Here is a 113-residue protein sequence, read N- to C-terminus: U-scoloptoxin(16)-Sa1a (113 aa).

Positions 1–29 are cleaved as a signal peptide; sequence MAPPSNPLFVVLCWALFAYLMLVLRDIQA.

It belongs to the scoloptoxin-16 family. Contains 4 disulfide bonds. In terms of tissue distribution, expressed by the venom gland.

The protein resides in the secreted. The polypeptide is U-scoloptoxin(16)-Sa1a (Scolopendra alternans (Florida Keys giant centipede)).